Consider the following 226-residue polypeptide: MQTTTVPMAAAAAVAPSTTTSSSASFKVAAYAWSSCRSSSSPATRLVAAPNHQRPPLVVGAIAGLDPVTAVQLPLTAGNVESVLDQVRPYLTADGGDVALHEIAGNVVRLKLQGACGSCPSSLITIKRGIERRLMEKIPDVAAVEPVTDKETGLELNEENVEKVLNEIRPYLAGTGGGGLQFLMIKGPIVKVRLTGPAAVVRTVRIAVSKKLREKIPSIQIVQLLS.

Residues M1–T76 constitute a chloroplast transit peptide.

The protein belongs to the NifU family. As to quaternary structure, homodimer; disulfide-linked.

It is found in the plastid. The protein localises to the chloroplast stroma. Functionally, molecular scaffold for [Fe-S] cluster assembly of chloroplastic iron-sulfur proteins. The chain is NifU-like protein 1, chloroplastic (NIFU1) from Oryza sativa subsp. japonica (Rice).